Reading from the N-terminus, the 129-residue chain is NADH-quinone oxidoreductase subunit A (129 aa).

The next 3 membrane-spanning stretches (helical) occupy residues 14-34 (LAIH…VAAW), 67-87 (FLIA…FAWA), and 95-115 (WLGL…LVYL).

Belongs to the complex I subunit 3 family. NDH-1 is composed of 14 different subunits. Subunits NuoA, H, J, K, L, M, N constitute the membrane sector of the complex.

The protein localises to the cell inner membrane. It catalyses the reaction a quinone + NADH + 5 H(+)(in) = a quinol + NAD(+) + 4 H(+)(out). Its function is as follows. NDH-1 shuttles electrons from NADH, via FMN and iron-sulfur (Fe-S) centers, to quinones in the respiratory chain. The immediate electron acceptor for the enzyme in this species is believed to be ubiquinone. Couples the redox reaction to proton translocation (for every two electrons transferred, four hydrogen ions are translocated across the cytoplasmic membrane), and thus conserves the redox energy in a proton gradient. This chain is NADH-quinone oxidoreductase subunit A, found in Rhodopseudomonas palustris (strain BisB5).